The sequence spans 295 residues: GTPase Era (295 aa).

Positions 7 to 176 constitute an Era-type G domain; that stretch reads KTVSVCIIGR…ITSKAKIAPW (170 aa). Residues 15-22 form a G1 region; that stretch reads GRPNSGKS. 15–22 is a GTP binding site; it reads GRPNSGKS. The segment at 41–45 is G2; sequence QTTRS. A G3 region spans residues 62 to 65; that stretch reads DTPG. GTP is bound by residues 62–66 and 124–127; these read DTPGI and NKIE. Residues 124-127 form a G4 region; the sequence is NKIE. Positions 152-154 are G5; sequence ISA. The 78-residue stretch at 204–281 folds into the KH type-2 domain; sequence LQQELPYKLT…HLFLFVKVRE (78 aa).

Belongs to the TRAFAC class TrmE-Era-EngA-EngB-Septin-like GTPase superfamily. Era GTPase family. Monomer.

It localises to the cytoplasm. The protein localises to the cell inner membrane. Its function is as follows. An essential GTPase that binds both GDP and GTP, with rapid nucleotide exchange. Plays a role in 16S rRNA processing and 30S ribosomal subunit biogenesis and possibly also in cell cycle regulation and energy metabolism. The protein is GTPase Era of Rickettsia canadensis (strain McKiel).